Consider the following 168-residue polypeptide: Small ribosomal subunit protein uS5 (168 aa).

Positions 14–77 (FEERVVSINR…EAAKKNLITV (64 aa)) constitute an S5 DRBM domain.

Belongs to the universal ribosomal protein uS5 family. Part of the 30S ribosomal subunit. Contacts proteins S4 and S8.

With S4 and S12 plays an important role in translational accuracy. In terms of biological role, located at the back of the 30S subunit body where it stabilizes the conformation of the head with respect to the body. This Lactococcus lactis subsp. cremoris (strain MG1363) protein is Small ribosomal subunit protein uS5.